The following is a 624-amino-acid chain: Bifunctional 3'-phosphoadenosine 5'-phosphosulfate synthase 1 (624 aa).

M1 carries the post-translational modification N-acetylmethionine. Residues 1-225 (MEIPGSLCKK…VVELLQERDI (225 aa)) are adenylyl-sulfate kinase. N6-acetyllysine is present on K12. 62 to 67 (GAGKTT) contacts ATP. Adenosine 5'-phosphosulfate contacts are provided by residues 89–92 (DNIR), F101, 106–109 (REEN), 132–133 (IS), K171, and 184–185 (GF). ATP is bound by residues C207, C212, 419-422 (QLRN), 521-525 (GRDPA), and A563. The interval 234-624 (VKELYVPENK…VEYYKSLEKA (391 aa)) is sulfate adenylyltransferase.

It in the N-terminal section; belongs to the APS kinase family. In the C-terminal section; belongs to the sulfate adenylyltransferase family. As to quaternary structure, homodimer. As to expression, expressed in the neonatal brain and in cartilage.

It carries out the reaction sulfate + ATP + H(+) = adenosine 5'-phosphosulfate + diphosphate. The catalysed reaction is adenosine 5'-phosphosulfate + ATP = 3'-phosphoadenylyl sulfate + ADP + H(+). It participates in sulfur metabolism; sulfate assimilation. Functionally, bifunctional enzyme with both ATP sulfurylase and APS kinase activity, which mediates two steps in the sulfate activation pathway. The first step is the transfer of a sulfate group to ATP to yield adenosine 5'-phosphosulfate (APS), and the second step is the transfer of a phosphate group from ATP to APS yielding 3'-phosphoadenylylsulfate (PAPS: activated sulfate donor used by sulfotransferase). In mammals, PAPS is the sole source of sulfate; APS appears to be only an intermediate in the sulfate-activation pathway. Required for normal biosynthesis of sulfated L-selectin ligands in endothelial cells. The polypeptide is Bifunctional 3'-phosphoadenosine 5'-phosphosulfate synthase 1 (Papss1) (Mus musculus (Mouse)).